Consider the following 483-residue polypeptide: MIKLEQVVEILKKDNNFREISSAGEYYFNWPKEVNFDQLSYDSRKSTKDTLFFAKGLNFKKEYLTDLEAAFYVSEFDYEVALPAIIVTDVKRAMALIAANFYKFPQNKLKTLALTGTKGKTTSAYFAKSILDKMNGGKTALLSTAQTTLDGQNYFKSELTTPESLDLLEMMAKALENGMTHLVMEVSSQAYKTERVYGLTFDVGVFLNISPDHIGPVEHPTLEDYFYCKRQLLKNSRYFVANAEMNHFAIIKEELNERKIPHAFYGADSENKIIESKGLHFVTDGSVSGEFDIRLLGRFNQENALATALATKALGASFENIRQGLASAIVPGRMELLTAKNGAHIYIDYAHNGLSLENLVEVVEDHHAGQLFLVLGSTGNKGESRRKDFGQVIENHPRLNVILTTDDSNRENPKTIADEIASFVSRELDFELDREFAIKKAISKTQNSDDAVIIAGKGADMFQLKDGKREPYIGDSPAAQKYL.

A UDP-N-acetyl-alpha-D-muramoyl-L-alanyl-D-glutamate-binding site is contributed by Ser43. 116-122 (GTKGKTT) contacts ATP. UDP-N-acetyl-alpha-D-muramoyl-L-alanyl-D-glutamate-binding positions include 160–161 (TT), Ser187, and Arg195. At Lys229 the chain carries N6-carboxylysine.

Belongs to the MurCDEF family. MurE subfamily. In terms of processing, carboxylation is probably crucial for Mg(2+) binding and, consequently, for the gamma-phosphate positioning of ATP.

It is found in the cytoplasm. It functions in the pathway cell wall biogenesis; peptidoglycan biosynthesis. In terms of biological role, catalyzes the addition of an amino acid to the nucleotide precursor UDP-N-acetylmuramoyl-L-alanyl-D-glutamate (UMAG) in the biosynthesis of bacterial cell-wall peptidoglycan. The protein is UDP-N-acetylmuramyl-tripeptide synthetase of Lactococcus lactis subsp. cremoris (strain SK11).